Here is a 209-residue protein sequence, read N- to C-terminus: Large ribosomal subunit protein uL3 (209 aa).

A disordered region spans residues 141–163 (RAVGSMGASSDPSRTFKNKRMPG).

It belongs to the universal ribosomal protein uL3 family. In terms of assembly, part of the 50S ribosomal subunit. Forms a cluster with proteins L14 and L19.

Functionally, one of the primary rRNA binding proteins, it binds directly near the 3'-end of the 23S rRNA, where it nucleates assembly of the 50S subunit. The polypeptide is Large ribosomal subunit protein uL3 (Clostridium botulinum (strain Kyoto / Type A2)).